The primary structure comprises 220 residues: Pyridoxine/pyridoxamine 5'-phosphate oxidase (220 aa).

FMN is bound by residues arginine 49 to lysine 54, tyrosine 68 to threonine 69, lysine 75, and glutamine 97. Lysine 54 provides a ligand contact to substrate. Substrate contacts are provided by tyrosine 115, arginine 119, and serine 123. Residues glutamine 132–serine 133 and tryptophan 176 each bind FMN. Arginine 182–histidine 184 serves as a coordination point for substrate. Arginine 186 provides a ligand contact to FMN.

It belongs to the pyridoxamine 5'-phosphate oxidase family. As to quaternary structure, homodimer. Requires FMN as cofactor.

The enzyme catalyses pyridoxamine 5'-phosphate + O2 + H2O = pyridoxal 5'-phosphate + H2O2 + NH4(+). The catalysed reaction is pyridoxine 5'-phosphate + O2 = pyridoxal 5'-phosphate + H2O2. The protein operates within cofactor metabolism; pyridoxal 5'-phosphate salvage; pyridoxal 5'-phosphate from pyridoxamine 5'-phosphate: step 1/1. Its pathway is cofactor metabolism; pyridoxal 5'-phosphate salvage; pyridoxal 5'-phosphate from pyridoxine 5'-phosphate: step 1/1. Catalyzes the oxidation of either pyridoxine 5'-phosphate (PNP) or pyridoxamine 5'-phosphate (PMP) into pyridoxal 5'-phosphate (PLP). The protein is Pyridoxine/pyridoxamine 5'-phosphate oxidase of Paracoccus denitrificans (strain Pd 1222).